A 248-amino-acid chain; its full sequence is Homeobox protein Hox-A4 (248 aa).

The tract at residues 23-107 (YQQSGYIPNP…PDGGAGANAS (85 aa)) is disordered. Residues 35–51 (YYERPKDTGFPHHDEPS) show a composition bias toward basic and acidic residues. The short motif at 128–133 (VYPWMK) is the Antp-type hexapeptide element. The homeobox DNA-binding region spans 149–208 (PKRSRTAYTRQQALELEKEFHFNRYLTRRRRVEIAHTMCLSERQVKIWFQNRRMKWKKEH). The segment at 207 to 248 (EHKLPNTKIRSSSSASSSASGAQQQQIKTGQQLVPTPCTAGL) is disordered. The span at 217–238 (SSSSASSSASGAQQQQIKTGQQ) shows a compositional bias: low complexity.

Belongs to the Antp homeobox family. Deformed subfamily.

It is found in the nucleus. Functionally, sequence-specific transcription factor which is part of a developmental regulatory system that provides cells with specific positional identities on the anterior-posterior axis. This Morone saxatilis (Striped bass) protein is Homeobox protein Hox-A4 (hoxa4).